The following is a 416-amino-acid chain: N-carbamoyl-L-amino-acid amidohydrolase (416 aa).

Residues His87, Asp98, Glu133, and His194 each coordinate a divalent metal cation. An N-carbamoyl-L-alpha-amino acid-binding residues include Gln197, His230, Asn279, Arg292, and Gly361. The interval 213 to 331 is involved in dimerization; sequence HCQGLWWLEF…SIEAVGHFDP (119 aa). His386 lines the a divalent metal cation pocket.

Belongs to the peptidase M20 family. As to quaternary structure, homodimer. The cofactor is Mn(2+). It depends on Ni(2+) as a cofactor. Co(2+) is required as a cofactor. Fe(2+) serves as cofactor.

The enzyme catalyses an N-carbamoyl-L-alpha-amino acid + H2O + 2 H(+) = an L-alpha-amino acid + NH4(+) + CO2. It carries out the reaction N-carbamoyl-L-methionine + H2O + 2 H(+) = L-methionine + NH4(+) + CO2. The catalysed reaction is N-acetyl-L-methionine + H2O = L-methionine + acetate. It catalyses the reaction N(alpha)-formyl-L-methionine + H2O = formate + L-methionine. The enzyme catalyses N-carbamoyl-L-alanine + H2O + 2 H(+) = L-alanine + NH4(+) + CO2. It carries out the reaction N-carbamoyl-L-cysteine + H2O + 2 H(+) = L-cysteine + NH4(+) + CO2. The catalysed reaction is N-carbamoyl-L-tryptophan + H2O + 2 H(+) = L-tryptophan + NH4(+) + CO2. It catalyses the reaction N-carbamoyl-L-valine + H2O + 2 H(+) = L-valine + NH4(+) + CO2. The enzyme catalyses N-carbamoyl-L-phenylalanine + H2O + 2 H(+) = L-phenylalanine + NH4(+) + CO2. With respect to regulation, strongly inhibited by Hg(2+), Cu(2+), Zn(2+), Pb(2+) and Fe(3+) ions, and slightly inhibited by Na(+) and K(+) ions. Beta-mercaptoethanol and 5,5'-dithiobis-(2-nitrobenzoic acid)(DTNB) cause 34% and 42% inhibition, respectively. Catalyzes the hydrolysis of both aliphatic and aromatic N-carbamoyl-L-alpha-amino acids to free L-alpha-amino acids. Is strictly L-specific since it is inactive toward N-carbamoyl-D-alpha-amino acids. Is also able to hydrolyze N-formyl-L-methionine and N-acetyl-L-methionine, but not ureidosuccinate or 3-ureidopropanoate. In Rhizobium meliloti (Ensifer meliloti), this protein is N-carbamoyl-L-amino-acid amidohydrolase.